We begin with the raw amino-acid sequence, 130 residues long: Small ribosomal subunit protein uS9 (130 aa).

This sequence belongs to the universal ribosomal protein uS9 family.

This is Small ribosomal subunit protein uS9 from Xanthomonas axonopodis pv. citri (strain 306).